Consider the following 398-residue polypeptide: tRNA(Ile)-lysidine synthase (398 aa).

25 to 30 (SGGVDS) is a binding site for ATP.

This sequence belongs to the tRNA(Ile)-lysidine synthase family.

It localises to the cytoplasm. The enzyme catalyses cytidine(34) in tRNA(Ile2) + L-lysine + ATP = lysidine(34) in tRNA(Ile2) + AMP + diphosphate + H(+). Its function is as follows. Ligates lysine onto the cytidine present at position 34 of the AUA codon-specific tRNA(Ile) that contains the anticodon CAU, in an ATP-dependent manner. Cytidine is converted to lysidine, thus changing the amino acid specificity of the tRNA from methionine to isoleucine. The protein is tRNA(Ile)-lysidine synthase of Francisella tularensis subsp. tularensis (strain SCHU S4 / Schu 4).